The chain runs to 362 residues: Heme A synthase (362 aa).

The next 5 membrane-spanning stretches (helical) occupy residues 12 to 32 (AVRI…LVGG), 102 to 122 (VIGA…DLGG), 128 to 148 (LWII…MVAS), 159 to 179 (VRLA…VWTL), and 198 to 218 (AAVL…VAGL). Residue H262 participates in heme binding. 3 helical membrane-spanning segments follow: residues 264 to 281 (MLAY…IDAW), 289 to 309 (GALA…VTLL), and 312 to 332 (VPIG…TLAV). Residue H320 coordinates heme.

This sequence belongs to the COX15/CtaA family. Type 2 subfamily. In terms of assembly, interacts with CtaB. Heme b is required as a cofactor.

The protein localises to the cell membrane. It carries out the reaction Fe(II)-heme o + 2 A + H2O = Fe(II)-heme a + 2 AH2. It participates in porphyrin-containing compound metabolism; heme A biosynthesis; heme A from heme O: step 1/1. In terms of biological role, catalyzes the conversion of heme O to heme A by two successive hydroxylations of the methyl group at C8. The first hydroxylation forms heme I, the second hydroxylation results in an unstable dihydroxymethyl group, which spontaneously dehydrates, resulting in the formyl group of heme A. The sequence is that of Heme A synthase from Rhodopseudomonas palustris (strain BisB18).